Consider the following 282-residue polypeptide: Bifunctional protein FolD (282 aa).

NADP(+) is bound by residues 165–167 and Ser-190; that span reads GRS.

Belongs to the tetrahydrofolate dehydrogenase/cyclohydrolase family. As to quaternary structure, homodimer.

It catalyses the reaction (6R)-5,10-methylene-5,6,7,8-tetrahydrofolate + NADP(+) = (6R)-5,10-methenyltetrahydrofolate + NADPH. The catalysed reaction is (6R)-5,10-methenyltetrahydrofolate + H2O = (6R)-10-formyltetrahydrofolate + H(+). It participates in one-carbon metabolism; tetrahydrofolate interconversion. Functionally, catalyzes the oxidation of 5,10-methylenetetrahydrofolate to 5,10-methenyltetrahydrofolate and then the hydrolysis of 5,10-methenyltetrahydrofolate to 10-formyltetrahydrofolate. The chain is Bifunctional protein FolD from Acinetobacter baumannii (strain ATCC 17978 / DSM 105126 / CIP 53.77 / LMG 1025 / NCDC KC755 / 5377).